The chain runs to 984 residues: Mediator of RNA polymerase II transcription subunit 5 (984 aa).

The protein belongs to the Mediator complex subunit 5 family. Component of the Mediator complex.

The protein localises to the nucleus. Component of the Mediator complex, a coactivator involved in the regulated transcription of nearly all RNA polymerase II-dependent genes. Mediator functions as a bridge to convey information from gene-specific regulatory proteins to the basal RNA polymerase II transcription machinery. Mediator is recruited to promoters by direct interactions with regulatory proteins and serves as a scaffold for the assembly of a functional preinitiation complex with RNA polymerase II and the general transcription factors. The protein is Mediator of RNA polymerase II transcription subunit 5 (NUT1) of Phaeosphaeria nodorum (strain SN15 / ATCC MYA-4574 / FGSC 10173) (Glume blotch fungus).